We begin with the raw amino-acid sequence, 1651 residues long: Alsin (1651 aa).

RCC1 repeat units follow at residues 59–108, 109–167, and 169–218; these read DGEV…AVTE, SGVV…ALSI, and REIW…ALVQ. Residues 444 to 476 form a disordered region; the sequence is REEQVKQESLQGKKSSSLMDIREEESEGGSRRL. The segment covering 450-461 has biased composition (polar residues); it reads QESLQGKKSSSL. 4 positions are modified to phosphoserine: Ser-459, Ser-460, Ser-477, and Ser-486. Residue Thr-504 is modified to Phosphothreonine. RCC1 repeat units lie at residues 519-570 and 572-621; these read RTEV…ALTA and SQVY…FLVD. The residue at position 527 (Lys-527) is an N6-acetyllysine. The region spanning 684–879 is the DH domain; sequence GYIASLHELA…ESLALHLGKK (196 aa). The PH domain maps to 895 to 1001; sequence GKMTDSLRKP…RAISQAVDQA (107 aa). 8 MORN repeats span residues 1043 to 1065, 1066 to 1088, 1094 to 1116, 1117 to 1139, 1145 to 1167, 1169 to 1191, 1192 to 1214, and 1215 to 1238; these read YDGRWLSGKPHGRGVLKWPDGKV, YSGTFRNGLEDGYGEYRIPNKAL, YVGHWKEGKMCGQGVYSYASGEV, FEGCFQDNMRHGHGLLRSGKLTS, FIGQWVMDKKAGYGVFDDITRGE, YMGMWQDDACQGNGVVVTQFGLY, YEGNFHLNKMMGNGVLLSEDDTI, and YEGEFSDDWTLCGKGTLTMPNGDY. Ser-1329 is modified (phosphoserine). The 145-residue stretch at 1507–1651 folds into the VPS9 domain; that stretch reads KQPDIALLGF…YYQIQREKLN (145 aa).

In terms of assembly, forms a heteromeric complex with ALS2CL. Interacts with ALS2CL.

In terms of biological role, may act as a GTPase regulator. Controls survival and growth of spinal motoneurons. The sequence is that of Alsin (Als2) from Rattus norvegicus (Rat).